The primary structure comprises 109 residues: Period circadian protein (109 aa).

The tract at residues 59–109 (CFEGSGGSGSSGNFTSGSNLNMRSVTNTSNTGTGTSSESVPLVTLTEALIS) is disordered. Residues 69–98 (SGNFTSGSNLNMRSVTNTSNTGTGTSSESV) are compositionally biased toward low complexity.

As to quaternary structure, forms a heterodimer with timeless (TIM); the complex then translocates into the nucleus. In terms of processing, phosphorylated with a circadian rhythmicity, probably by the double-time protein (dbt). Phosphorylation could be implicated in the stability of per monomer and in the formation of heterodimer per-tim.

Its subcellular location is the nucleus. The protein resides in the cytoplasm. The protein localises to the perinuclear region. Essential for biological clock functions. Determines the period length of circadian and ultradian rhythms; an increase in PER dosage leads to shortened circadian rhythms and a decrease leads to lengthened circadian rhythms. Essential for the circadian rhythmicity of locomotor activity, eclosion behavior, and for the rhythmic component of the male courtship song that originates in the thoracic nervous system. The biological cycle depends on the rhythmic formation and nuclear localization of the TIM-PER complex. Light induces the degradation of TIM, which promotes elimination of PER. Nuclear activity of the heterodimer coordinatively regulates PER and TIM transcription through a negative feedback loop. Behaves as a negative element in circadian transcriptional loop. Does not appear to bind DNA, suggesting indirect transcriptional inhibition. In Syritta pipiens (Hoverfly), this protein is Period circadian protein (per).